A 519-amino-acid chain; its full sequence is Protein twist (519 aa).

Disordered regions lie at residues 53–77 (MQQQ…QQQY), 131–156 (NFEQ…VATA), 301–321 (YEAY…SDRD), and 368–389 (FRKP…DEFS). Composition is skewed to low complexity over residues 54-76 (QQQQ…QQQQ) and 134-146 (QQQQ…QQQQ). A compositionally biased stretch (polar residues) spans 308–317 (NSLNGSTYSS). Residues 368 to 379 (FRKPRRRLKRKP) show a composition bias toward basic residues. Residues 390–441 (NQRVMANVRERQRTQSLNDAFKALQQIIPTLPSDKLSKIQTLKLATRYIDFL) form the bHLH domain.

Efficient DNA binding requires dimerization with another bHLH protein. Homodimer.

The protein resides in the nucleus. Involved in the establishment and dorsoventral patterning of germ layers in the embryo. In Drosophila virilis (Fruit fly), this protein is Protein twist.